Reading from the N-terminus, the 156-residue chain is Ribosome maturation factor RimP (156 aa).

Belongs to the RimP family.

Its subcellular location is the cytoplasm. Required for maturation of 30S ribosomal subunits. This chain is Ribosome maturation factor RimP, found in Bacillus velezensis (strain DSM 23117 / BGSC 10A6 / LMG 26770 / FZB42) (Bacillus amyloliquefaciens subsp. plantarum).